The primary structure comprises 405 residues: uncharacterized protein (405 aa).

10 helical membrane-spanning segments follow: residues 9–29, 41–61, 74–94, 98–118, 138–158, 168–190, 227–247, 252–272, 291–311, and 373–393; these read VFAL…VTIV, VFLA…ASFC, VLAG…YSVT, QAFF…GAFF, ANGV…GLGG, LVVG…LHVN, ALAG…AVLH, WWGM…VIAI, LVMS…LCAL, and IAFI…LAQP.

It belongs to the major facilitator superfamily. Drug:H(+) antiporter-3 (DHA3) (TC 2.A.1.21) family.

It is found in the cell membrane. This is an uncharacterized protein from Bacillus subtilis (strain 168).